The following is a 423-amino-acid chain: F-box/LRR-repeat protein 2 (423 aa).

In terms of domain architecture, F-box spans 9 to 55; that stretch reads GLINKKLPKELLLRIFSFLDIVTLCRCAQISKAWNILALDGSNWQRI. LRR repeat units follow at residues 61-87, 88-113, 114-139, 140-165, 166-191, 192-217, 218-243, 244-269, 270-295, 296-321, 322-350, 351-375, and 376-401; these read QTDV…SLRG, CIGV…NLNG, CTKI…DLTS, CVSI…NLSW, CDQI…LLRG, CTQL…NLQS, CSRI…CLSG, CSNL…EAAR, CSHL…DLEE, CILI…SLSH, CELI…ELDN, CLLI…ELYD, and CQQV…AYFA. Positions 80–90 are interaction with Calmodulin; sequence LRKLSLRGCIG. K201 is covalently cross-linked (Glycyl lysine isopeptide (Lys-Gly) (interchain with G-Cter in ubiquitin)). T404 carries the post-translational modification Phosphothreonine. Residue C420 is the site of S-geranylgeranyl cysteine attachment. The CAAX motif signature appears at 420–423; the sequence is CVIL.

Part of the SCF (SKP1-CUL1-F-box) E3 ubiquitin-protein ligase complex SCF(FBXL2) composed of CUL1, SKP1, RBX1 and FBXL2. Interacts with calmodulin; may antagonize substrate ubiquitination by SCF(FBXL2). May interact with PIK3R1. Interacts with PTPN13. As to quaternary structure, (Microbial infection) Interacts with hepatitis C virus non-structural protein 5A (NS5A) and less efficiently, with hepatitis C virus non-structural protein 5B (NS5B); a reaction crucial for hepatitis C virus RNA replication. In terms of processing, phosphorylated by GSK-beta (GSK3B), promoting recognition by FBXO3, leading to its ubiquitination by the SCF(FBXO3) complex. Ubiquitinated at Lys-201 by the SCF(FBXO3) complex in response to lipopolysaccharide (LPS), leading to its degradation by the proteasome. In terms of tissue distribution, expressed in brain, heart, kidney, liver, lung, pancreas and placenta.

It is found in the membrane. It functions in the pathway protein modification; protein ubiquitination. Calcium-activated substrate recognition component of the SCF (SKP1-cullin-F-box protein) E3 ubiquitin-protein ligase complex, SCF(FBXL2), which mediates the ubiquitination and subsequent proteasomal degradation of target proteins. Unlike many F-box proteins, FBXL2 does not seem to target phosphodegron within its substrates but rather calmodulin-binding motifs and is thereby antagonized by calmodulin. This is the case for the cyclins CCND2 and CCND3 which polyubiquitination and subsequent degradation are inhibited by calmodulin. Through CCND2 and CCND3 degradation induces cell-cycle arrest in G(0). SCF(FBXL2) also mediates PIK3R2 ubiquitination and proteasomal degradation thereby regulating phosphatidylinositol 3-kinase signaling and autophagy. PCYT1A monoubiquitination by SCF(FBXL2) and subsequent degradation regulates synthesis of phosphatidylcholine, which is utilized for formation of membranes and of pulmonary surfactant. The SCF(FBXL2) complex acts as a regulator of inflammation by mediating ubiquitination and degradation of TRAF proteins (TRAF1, TRAF2, TRAF3, TRAF4, TRAF5 and TRAF6). The SCF(FBXL2) complex acts as a negative regulator of the NLRP3 inflammasome by mediating ubiquitination and degradation of NLRP3. This is F-box/LRR-repeat protein 2 from Homo sapiens (Human).